We begin with the raw amino-acid sequence, 271 residues long: Putative phosphoenolpyruvate synthase regulatory protein (271 aa).

152 to 159 (GVSRSGKT) lines the ADP pocket.

This sequence belongs to the pyruvate, phosphate/water dikinase regulatory protein family. PSRP subfamily.

The catalysed reaction is [pyruvate, water dikinase] + ADP = [pyruvate, water dikinase]-phosphate + AMP + H(+). It carries out the reaction [pyruvate, water dikinase]-phosphate + phosphate + H(+) = [pyruvate, water dikinase] + diphosphate. In terms of biological role, bifunctional serine/threonine kinase and phosphorylase involved in the regulation of the phosphoenolpyruvate synthase (PEPS) by catalyzing its phosphorylation/dephosphorylation. The sequence is that of Putative phosphoenolpyruvate synthase regulatory protein from Dichelobacter nodosus (strain VCS1703A).